A 521-amino-acid polypeptide reads, in one-letter code: Acidic amino acid decarboxylase GADL1 (521 aa).

Residues 1–12 (MSLLPDRERAPD) show a composition bias toward basic and acidic residues. Residues 1 to 20 (MSLLPDRERAPDGDISPQEM) form a disordered region. N6-(pyridoxal phosphate)lysine is present on lysine 333.

Belongs to the group II decarboxylase family. Homodimer. Requires pyridoxal 5'-phosphate as cofactor. In terms of tissue distribution, expressed at highest levels in skeletal muscles. Also detected heart, spleen and rumen.

The enzyme catalyses L-aspartate + H(+) = beta-alanine + CO2. The catalysed reaction is 3-sulfino-L-alanine + H(+) = hypotaurine + CO2. It catalyses the reaction L-cysteate + H(+) = taurine + CO2. Its function is as follows. Catalyzes the decarboxylation of L-aspartate, 3-sulfino-L-alanine (cysteine sulfinic acid), and L-cysteate to beta-alanine, hypotaurine and taurine, respectively. The preferred substrate is L-aspartate. Does not exhibit any decarboxylation activity toward glutamate. This Bos taurus (Bovine) protein is Acidic amino acid decarboxylase GADL1 (GADL1).